A 458-amino-acid polypeptide reads, in one-letter code: UDP-N-acetylglucosamine 1-carboxyvinyltransferase (458 aa).

34-35 provides a ligand contact to phosphoenolpyruvate; the sequence is KN. Arginine 104 lines the UDP-N-acetyl-alpha-D-glucosamine pocket. The active-site Proton donor is cysteine 128. Cysteine 128 bears the 2-(S-cysteinyl)pyruvic acid O-phosphothioketal mark. The UDP-N-acetyl-alpha-D-glucosamine site is built by aspartate 319 and isoleucine 341.

The protein belongs to the EPSP synthase family. MurA subfamily.

The protein localises to the cytoplasm. The catalysed reaction is phosphoenolpyruvate + UDP-N-acetyl-alpha-D-glucosamine = UDP-N-acetyl-3-O-(1-carboxyvinyl)-alpha-D-glucosamine + phosphate. Its pathway is cell wall biogenesis; peptidoglycan biosynthesis. In terms of biological role, cell wall formation. Adds enolpyruvyl to UDP-N-acetylglucosamine. This Prochlorococcus marinus (strain MIT 9515) protein is UDP-N-acetylglucosamine 1-carboxyvinyltransferase.